The following is a 389-amino-acid chain: MDIQPWYLKTSKLALALAIIHSKPADRSSREYTEYLASLVTQKESTWKSKLEALEAEVLQLRQKLLLSRISSGLFKNGPDVLPTLSDQEPTSSENTLTLMDDSGCVLSNEQRNEPAELSQHFVESTDPPLLPLPLEKRPRTTLENPLSSHMQFFQHLLELKKWTESSSLKVYLTHFEKDSSTVSDSVSQLLDALITFYRNPKLPFSSFWTEAVGTLARLASDFNLSNHIFKRCSKKLEEFEKTLLQAILENNSINRFQVQRYVSQSLVTLGSCSLLRKSIISLLLSEVNSFVDDLGAIDQDQGIYDVTRYENIFSLFWILEQVLQQAPQGDRTAHMDHSIPEMQTFLQKHDEVIFRLSDAFPLFAFYLWRLGVLLNSAEMETVKNESLP.

The interaction with REC114 stretch occupies residues 1–127 (MDIQPWYLKT…LSQHFVESTD (127 aa)).

It belongs to the MEI4L family. As to quaternary structure, part of the MCD recombinosome complex, at least composed of IHO1, REC114 and MEI4. Forms a complex with REC114; the interaction is required for MEI4 stability. Interacts (via N-terminal domain) with REC114 (via C-terminal domain). Interacts with IHO1. In terms of tissue distribution, expressed in adult testis and brain and in embryonic ovary.

The protein resides in the chromosome. In terms of biological role, required for DNA double-strand breaks (DSBs) formation in unsynapsed regions during meiotic recombination. Probably acts by forming a complex with IHO1 and REC114, which activates DSBs formation in unsynapsed regions, an essential step to ensure completion of synapsis. The polypeptide is Meiosis-specific protein MEI4 (Mus musculus (Mouse)).